The chain runs to 286 residues: Probable aquaporin PIP-type pTOM75 (286 aa).

A disordered region spans residues 1–35 (MAENKEEDVKLGANKFRETQPLGTAAQTDKDYKEP). Over 1–55 (MAENKEEDVKLGANKFRETQPLGTAAQTDKDYKEPPPAPLFEPGELSSWSFYRAG) the chain is Cytoplasmic. Positions 7 to 18 (EDVKLGANKFRE) are enriched in basic and acidic residues. The chain crosses the membrane as a helical span at residues 56–76 (IAEFMATFLFLYITILTVMGL). Residues 77–89 (KRSDSLCSSVGIQ) are Extracellular-facing. Residues 90–110 (GVAWAFGGMIFALVYCTAGIS) form a helical membrane-spanning segment. Residues 111–133 (GGHINPAVTFGLFLARKLSLTRA) lie on the Cytoplasmic side of the membrane. The short motif at 115–117 (NPA) is the NPA 1 element. The helical transmembrane segment at 134 to 154 (VFYMVMQCLGAICGAGVVKGF) threads the bilayer. Over 155-175 (MVGPYQRLGGGANVVNPGYTK) the chain is Extracellular. A helical transmembrane segment spans residues 176-196 (GDGLGAEIIGTFVLVYTVFSA). The Cytoplasmic segment spans residues 197 to 209 (TDAKRNARDSHVP). Residues 210 to 230 (ILAPLPIGFAVFLVHLATIPI) form a helical membrane-spanning segment. The Extracellular portion of the chain corresponds to 231–257 (TGTGINPARSLGAAIIYNDEHAWNDHW). The short motif at 236 to 238 (NPA) is the NPA 2 element. The chain crosses the membrane as a helical span at residues 258 to 278 (IFWVGPMIGAALAAIYHQIII). Residues 279–286 (RAMPFHRS) lie on the Cytoplasmic side of the membrane.

This sequence belongs to the MIP/aquaporin (TC 1.A.8) family. PIP (TC 1.A.8.11) subfamily. Roots, ripening fruit and senescing leaves.

It is found in the cell membrane. Its function is as follows. Aquaporins facilitate the transport of water and small neutral solutes across cell membranes. This Solanum lycopersicum (Tomato) protein is Probable aquaporin PIP-type pTOM75.